The chain runs to 668 residues: Protein ENTREP3 (668 aa).

The next 3 helical transmembrane spans lie at 34-54 (LLTL…FSMV), 67-87 (SCPS…IVSW), and 91-111 (FTLV…LSMA). N-linked (GlcNAc...) asparagine glycosylation is present at asparagine 160. A helical membrane pass occupies residues 174 to 194 (LFSVCGLTICAAIICTLSAIV). 2 positions are modified to phosphoserine: serine 358 and serine 389. Disordered regions lie at residues 386-419 (FEES…PTAA), 442-503 (RVPR…SSDT), and 550-570 (SAEK…SGPA). Residues 398–407 (AARSYSCSAP) show a composition bias toward low complexity. The residue at position 493 (serine 493) is a Phosphoserine. At serine 574 the chain carries Phosphoserine. Disordered regions lie at residues 597–620 (KAPD…WGRP) and 645–668 (GRRL…ETGL). Residues 655–668 (HSLSLNGGSRETGL) are compositionally biased toward polar residues.

It belongs to the ENTREP family. As to quaternary structure, may interact with WWOX. As to expression, widely expressed.

It is found in the membrane. The polypeptide is Protein ENTREP3 (Homo sapiens (Human)).